Here is a 207-residue protein sequence, read N- to C-terminus: Guanylate kinase (207 aa).

A Guanylate kinase-like domain is found at 17–197 (GRLVVLAGPS…SCDELVSLLV (181 aa)). 24-31 (GPSAVGKS) serves as a coordination point for ATP.

This sequence belongs to the guanylate kinase family.

The protein localises to the cytoplasm. It catalyses the reaction GMP + ATP = GDP + ADP. Essential for recycling GMP and indirectly, cGMP. The protein is Guanylate kinase of Rhodococcus jostii (strain RHA1).